A 203-amino-acid chain; its full sequence is ATP-dependent Clp protease proteolytic subunit 1 (203 aa).

Catalysis depends on Ser101, which acts as the Nucleophile. Residue His126 is part of the active site.

It belongs to the peptidase S14 family. Fourteen ClpP subunits assemble into 2 heptameric rings which stack back to back to give a disk-like structure with a central cavity, resembling the structure of eukaryotic proteasomes.

The protein localises to the cytoplasm. The enzyme catalyses Hydrolysis of proteins to small peptides in the presence of ATP and magnesium. alpha-casein is the usual test substrate. In the absence of ATP, only oligopeptides shorter than five residues are hydrolyzed (such as succinyl-Leu-Tyr-|-NHMec, and Leu-Tyr-Leu-|-Tyr-Trp, in which cleavage of the -Tyr-|-Leu- and -Tyr-|-Trp bonds also occurs).. Functionally, cleaves peptides in various proteins in a process that requires ATP hydrolysis. Has a chymotrypsin-like activity. Plays a major role in the degradation of misfolded proteins. This Synechococcus sp. (strain JA-2-3B'a(2-13)) (Cyanobacteria bacterium Yellowstone B-Prime) protein is ATP-dependent Clp protease proteolytic subunit 1.